Here is a 206-residue protein sequence, read N- to C-terminus: Recombination protein RecR (206 aa).

The C4-type zinc finger occupies 58-73 (CENCHNISDTKVCEIC). The region spanning 81–176 (QTICVVEDIR…IISTIARGIS (96 aa)) is the Toprim domain.

This sequence belongs to the RecR family.

Its function is as follows. May play a role in DNA repair. It seems to be involved in an RecBC-independent recombinational process of DNA repair. It may act with RecF and RecO. In Flavobacterium johnsoniae (strain ATCC 17061 / DSM 2064 / JCM 8514 / BCRC 14874 / CCUG 350202 / NBRC 14942 / NCIMB 11054 / UW101) (Cytophaga johnsonae), this protein is Recombination protein RecR.